A 154-amino-acid chain; its full sequence is 6,7-dimethyl-8-ribityllumazine synthase (154 aa).

Residues Phe22, 56–58 (AFE), and 80–82 (AVI) contribute to the 5-amino-6-(D-ribitylamino)uracil site. Residue 85–86 (AT) participates in (2S)-2-hydroxy-3-oxobutyl phosphate binding. Residue His88 is the Proton donor of the active site. 5-amino-6-(D-ribitylamino)uracil is bound at residue Phe113. Arg127 contacts (2S)-2-hydroxy-3-oxobutyl phosphate.

Belongs to the DMRL synthase family.

The catalysed reaction is (2S)-2-hydroxy-3-oxobutyl phosphate + 5-amino-6-(D-ribitylamino)uracil = 6,7-dimethyl-8-(1-D-ribityl)lumazine + phosphate + 2 H2O + H(+). It functions in the pathway cofactor biosynthesis; riboflavin biosynthesis; riboflavin from 2-hydroxy-3-oxobutyl phosphate and 5-amino-6-(D-ribitylamino)uracil: step 1/2. Its function is as follows. Catalyzes the formation of 6,7-dimethyl-8-ribityllumazine by condensation of 5-amino-6-(D-ribitylamino)uracil with 3,4-dihydroxy-2-butanone 4-phosphate. This is the penultimate step in the biosynthesis of riboflavin. The protein is 6,7-dimethyl-8-ribityllumazine synthase of Clostridium botulinum (strain Okra / Type B1).